A 192-amino-acid chain; its full sequence is Ribosomal RNA small subunit methyltransferase G (192 aa).

S-adenosyl-L-methionine is bound by residues Gly-63, Leu-68, 112–113 (IE), and Arg-125.

This sequence belongs to the methyltransferase superfamily. RNA methyltransferase RsmG family.

It localises to the cytoplasm. It catalyses the reaction guanosine(527) in 16S rRNA + S-adenosyl-L-methionine = N(7)-methylguanosine(527) in 16S rRNA + S-adenosyl-L-homocysteine. In terms of biological role, specifically methylates the N7 position of guanine in position 527 of 16S rRNA. The polypeptide is Ribosomal RNA small subunit methyltransferase G (Rickettsia africae (strain ESF-5)).